Here is a 185-residue protein sequence, read N- to C-terminus: MINTIKQDAKNRMEKTLSVYLSDVDGIRTGRARASVLDGIVVETYGGRVKLNTISSISVSDNKTLLVKVWDINNVGAIKTAIINSNLGFGFSCEGAVIRLTVPDMTQDMRKNLVKLLGKISEDCRISIRNIRRDIMDKLKIMQDNKDISEDDLRIAGVEIQKITDEIIKKINDTFLAKEKELLHV.

The protein belongs to the RRF family.

Its subcellular location is the cytoplasm. Responsible for the release of ribosomes from messenger RNA at the termination of protein biosynthesis. May increase the efficiency of translation by recycling ribosomes from one round of translation to another. The polypeptide is Ribosome-recycling factor (Ehrlichia ruminantium (strain Gardel)).